The chain runs to 89 residues: Small ribosomal subunit protein uS15 (89 aa).

It belongs to the universal ribosomal protein uS15 family. In terms of assembly, part of the 30S ribosomal subunit. Forms a bridge to the 50S subunit in the 70S ribosome, contacting the 23S rRNA.

One of the primary rRNA binding proteins, it binds directly to 16S rRNA where it helps nucleate assembly of the platform of the 30S subunit by binding and bridging several RNA helices of the 16S rRNA. Its function is as follows. Forms an intersubunit bridge (bridge B4) with the 23S rRNA of the 50S subunit in the ribosome. This chain is Small ribosomal subunit protein uS15, found in Sodalis glossinidius (strain morsitans).